Here is a 469-residue protein sequence, read N- to C-terminus: tRNA-2-methylthio-N(6)-dimethylallyladenosine synthase (469 aa).

One can recognise an MTTase N-terminal domain in the interval 27-142 (KKVYIRTFGC…LPQMLAQRAR (116 aa)). [4Fe-4S] cluster-binding residues include cysteine 36, cysteine 73, cysteine 105, cysteine 179, cysteine 183, and cysteine 186. One can recognise a Radical SAM core domain in the interval 165–398 (KVDGAAAFVS…QATIEDNVRR (234 aa)). Residues 401 to 467 (ERRVGTVQRV…PHSLRGEPVL (67 aa)) enclose the TRAM domain.

Belongs to the methylthiotransferase family. MiaB subfamily. Monomer. It depends on [4Fe-4S] cluster as a cofactor.

Its subcellular location is the cytoplasm. It catalyses the reaction N(6)-dimethylallyladenosine(37) in tRNA + (sulfur carrier)-SH + AH2 + 2 S-adenosyl-L-methionine = 2-methylsulfanyl-N(6)-dimethylallyladenosine(37) in tRNA + (sulfur carrier)-H + 5'-deoxyadenosine + L-methionine + A + S-adenosyl-L-homocysteine + 2 H(+). Functionally, catalyzes the methylthiolation of N6-(dimethylallyl)adenosine (i(6)A), leading to the formation of 2-methylthio-N6-(dimethylallyl)adenosine (ms(2)i(6)A) at position 37 in tRNAs that read codons beginning with uridine. This chain is tRNA-2-methylthio-N(6)-dimethylallyladenosine synthase, found in Leptothrix cholodnii (strain ATCC 51168 / LMG 8142 / SP-6) (Leptothrix discophora (strain SP-6)).